A 171-amino-acid chain; its full sequence is Putative adenylate kinase (171 aa).

Positions 9, 11, 12, 13, and 14 each coordinate ATP. An NMP region spans residues 28–51 (SLGELIRQKGFVLGRDPIRGYLEA). The LID stretch occupies residues 99–109 (GRGYPEGKVLE). Arg-100 is an ATP binding site.

Belongs to the adenylate kinase family. AK6 subfamily. As to quaternary structure, interacts with uS11. Not a structural component of 40S pre-ribosomes, but transiently interacts with them by binding to uS11.

It carries out the reaction AMP + ATP = 2 ADP. It catalyses the reaction ATP + H2O = ADP + phosphate + H(+). In terms of biological role, broad-specificity nucleoside monophosphate (NMP) kinase that catalyzes the reversible transfer of the terminal phosphate group between nucleoside triphosphates and monophosphates. Also has ATPase activity. Involved in the late maturation steps of the 30S ribosomal particles, specifically 16S rRNA maturation. While NMP activity is not required for ribosome maturation, ATPase activity is. Associates transiently with small ribosomal subunit protein uS11. ATP hydrolysis breaks the interaction with uS11. May temporarily remove uS11 from the ribosome to enable a conformational change of the ribosomal RNA that is needed for the final maturation step of the small ribosomal subunit. The chain is Putative adenylate kinase from Methanothermobacter thermautotrophicus (strain ATCC 29096 / DSM 1053 / JCM 10044 / NBRC 100330 / Delta H) (Methanobacterium thermoautotrophicum).